A 58-amino-acid chain; its full sequence is Sodium/potassium-transporting ATPase subunit gamma (58 aa).

The helical transmembrane segment at 20–39 (NGGLIFAALAFIVGLVIILS) threads the bilayer.

This sequence belongs to the FXYD family. Regulatory subunit of the sodium/potassium-transporting ATPase which is composed of a catalytic alpha subunit, an auxiliary non-catalytic beta subunit and an additional regulatory subunit. As to expression, highest levels expressed in the kidney and spleen. Restricted to the basolateral membrane in renal epithelial cells and varies in its level of expression along the nephron.

It is found in the membrane. Its function is as follows. May be involved in forming the receptor site for cardiac glycoside binding or may modulate the transport function of the sodium ATPase. The protein is Sodium/potassium-transporting ATPase subunit gamma (FXYD2) of Bos taurus (Bovine).